Consider the following 590-residue polypeptide: Mannosyl-oligosaccharide 1,2-alpha-mannosidase mans-2 (590 aa).

The Cytoplasmic portion of the chain corresponds to 1-9 (MKTVRFNKQ). The helical; Signal-anchor for type II membrane protein transmembrane segment at 10 to 30 (ALAILAACFIFLLCVVCYFSA) threads the bilayer. The Lumenal portion of the chain corresponds to 31–590 (SSESHNAVVV…EAHPVPVLTN (560 aa)). Residues 88–102 (PARVESKPPGEKTST) are compositionally biased toward basic and acidic residues. The segment at 88-112 (PARVESKPPGEKTSTEPEETGVGKA) is disordered. N-linked (GlcNAc...) asparagine glycans are attached at residues Asn156, Asn212, Asn373, and Asn402. A disulfide bridge links Cys423 with Cys456. The Proton donor role is filled by Glu470. Thr580 lines the Ca(2+) pocket.

Belongs to the glycosyl hydrolase 47 family. It depends on Ca(2+) as a cofactor.

Its subcellular location is the membrane. It carries out the reaction N(4)-(alpha-D-Man-(1-&gt;2)-alpha-D-Man-(1-&gt;2)-alpha-D-Man-(1-&gt;3)-[alpha-D-Man-(1-&gt;2)-alpha-D-Man-(1-&gt;3)-[alpha-D-Man-(1-&gt;2)-alpha-D-Man-(1-&gt;6)]-alpha-D-Man-(1-&gt;6)]-beta-D-Man-(1-&gt;4)-beta-D-GlcNAc-(1-&gt;4)-beta-D-GlcNAc)-L-asparaginyl-[protein] (N-glucan mannose isomer 9A1,2,3B1,2,3) + 4 H2O = N(4)-(alpha-D-Man-(1-&gt;3)-[alpha-D-Man-(1-&gt;3)-[alpha-D-Man-(1-&gt;6)]-alpha-D-Man-(1-&gt;6)]-beta-D-Man-(1-&gt;4)-beta-D-GlcNAc-(1-&gt;4)-beta-D-GlcNAc)-L-asparaginyl-[protein] (N-glucan mannose isomer 5A1,2) + 4 beta-D-mannose. It catalyses the reaction N(4)-(alpha-D-Man-(1-&gt;2)-alpha-D-Man-(1-&gt;2)-alpha-D-Man-(1-&gt;3)-[alpha-D-Man-(1-&gt;3)-[alpha-D-Man-(1-&gt;2)-alpha-D-Man-(1-&gt;6)]-alpha-D-Man-(1-&gt;6)]-beta-D-Man-(1-&gt;4)-beta-D-GlcNAc-(1-&gt;4)-beta-D-GlcNAc)-L-asparaginyl-[protein] (N-glucan mannose isomer 8A1,2,3B1,3) + 3 H2O = N(4)-(alpha-D-Man-(1-&gt;3)-[alpha-D-Man-(1-&gt;3)-[alpha-D-Man-(1-&gt;6)]-alpha-D-Man-(1-&gt;6)]-beta-D-Man-(1-&gt;4)-beta-D-GlcNAc-(1-&gt;4)-beta-D-GlcNAc)-L-asparaginyl-[protein] (N-glucan mannose isomer 5A1,2) + 3 beta-D-mannose. The protein operates within protein modification; protein glycosylation. In terms of biological role, involved in the maturation of Asn-linked oligosaccharides. Progressively trim alpha-1,2-linked mannose residues from Man(9)GlcNAc(2) to produce Man(5)GlcNAc(2). The chain is Mannosyl-oligosaccharide 1,2-alpha-mannosidase mans-2 from Caenorhabditis elegans.